Reading from the N-terminus, the 696-residue chain is Elongation factor G 2 (696 aa).

The tr-type G domain maps to 5 to 281 (SKYRNIGIFA…AVVDYLPSPT (277 aa)). GTP is bound by residues 14–21 (AHVDAGKT), 78–82 (DTPGH), and 132–135 (NKLD).

The protein belongs to the TRAFAC class translation factor GTPase superfamily. Classic translation factor GTPase family. EF-G/EF-2 subfamily.

It localises to the cytoplasm. Its function is as follows. Catalyzes the GTP-dependent ribosomal translocation step during translation elongation. During this step, the ribosome changes from the pre-translocational (PRE) to the post-translocational (POST) state as the newly formed A-site-bound peptidyl-tRNA and P-site-bound deacylated tRNA move to the P and E sites, respectively. Catalyzes the coordinated movement of the two tRNA molecules, the mRNA and conformational changes in the ribosome. This Vibrio parahaemolyticus serotype O3:K6 (strain RIMD 2210633) protein is Elongation factor G 2.